We begin with the raw amino-acid sequence, 111 residues long: Nucleoid-associated protein PFL_1905 (111 aa).

2 disordered regions span residues 1-20 and 88-111; these read MKGGMAGLMKQAQQMQEKMA and SNSQEKMSGMTAGMQLPPGMKLPF.

The protein belongs to the YbaB/EbfC family. In terms of assembly, homodimer.

It localises to the cytoplasm. The protein localises to the nucleoid. Its function is as follows. Binds to DNA and alters its conformation. May be involved in regulation of gene expression, nucleoid organization and DNA protection. The sequence is that of Nucleoid-associated protein PFL_1905 from Pseudomonas fluorescens (strain ATCC BAA-477 / NRRL B-23932 / Pf-5).